The following is a 97-amino-acid chain: Small ribosomal subunit protein bS20 (97 aa).

The segment at 1–22 is disordered; sequence MANSKSALKRIRTSERNRLRNK.

The protein belongs to the bacterial ribosomal protein bS20 family.

Binds directly to 16S ribosomal RNA. This is Small ribosomal subunit protein bS20 from Crocosphaera subtropica (strain ATCC 51142 / BH68) (Cyanothece sp. (strain ATCC 51142)).